A 330-amino-acid polypeptide reads, in one-letter code: Pantothenate synthetase 2 (330 aa).

The Proton donor role is filled by H55. ATP is bound by residues 167–170 (GEKD), V196, and 204–207 (ASSR).

Belongs to the pantothenate synthetase family. In terms of assembly, homodimer.

Its subcellular location is the cytoplasm. The catalysed reaction is (R)-pantoate + beta-alanine + ATP = (R)-pantothenate + AMP + diphosphate + H(+). It participates in cofactor biosynthesis; (R)-pantothenate biosynthesis; (R)-pantothenate from (R)-pantoate and beta-alanine: step 1/1. Its function is as follows. Catalyzes the condensation of pantoate with beta-alanine in an ATP-dependent reaction via a pantoyl-adenylate intermediate. This chain is Pantothenate synthetase 2, found in Frankia alni (strain DSM 45986 / CECT 9034 / ACN14a).